Consider the following 602-residue polypeptide: Protein nessun dorma (602 aa).

Residues 188 to 208 are a coiled coil; that stretch reads AEAKYIQQRLDYLELDLSDAE.

Interacts (via N-terminus) with both members of the centralspindlin complex, Pav and Tum. As to expression, detected in testis (at protein level). Also expressed in ovary.

The protein resides in the midbody. Required during male meiosis for completion of spermatocyte cytokinesis and possibly also required in female germline cells. Also involved in ring canal formation in male and female germline cells. Not essential for cleavage furrow ingression but is required for contractile ring stability and the attachment of the furrowing membrane to the actomyosin ring in late telophase. Displays high binding affinity for beta-galactosides. In Drosophila melanogaster (Fruit fly), this protein is Protein nessun dorma.